The chain runs to 562 residues: Terpene synthase 2 (562 aa).

Mg(2+)-binding residues include D315, D319, D459, and E467. The DDXXD motif motif lies at 315–319 (DDEYD).

Belongs to the terpene synthase family. Tpsa subfamily. It depends on Mg(2+) as a cofactor. Requires Mn(2+) as cofactor. As to expression, expressed at low levels in stems, leaves, roots and fruits.

The catalysed reaction is (2E,6E)-farnesyl diphosphate = delta-cadinene + diphosphate. It carries out the reaction (2E,6E)-farnesyl diphosphate = alpha-cadinene + diphosphate. It catalyses the reaction (2E,6E)-farnesyl diphosphate + H2O = (-)-delta-cadinol + diphosphate. Its pathway is secondary metabolite biosynthesis; terpenoid biosynthesis. In terms of biological role, sesquiterpene synthase involved in the biosynthesis of volatile compounds that contribute to the characteristic flavors of black pepper. Mediates the conversion of (2E,6E)-farnesyl diphosphate (FPP) into alpha-cadinene, delta-cadinene and delta-cadinol. In Piper nigrum (Black pepper), this protein is Terpene synthase 2.